Reading from the N-terminus, the 392-residue chain is MYQPPTGVRDLLPLDVSQKLWIEQRLQRVFTRWGYQRIITPTLERMETLQASGSVDLQAILQLRDAEGVSLGLRPDPTPSLARAVATRLADAPLPVRLSYQMNVFRSTTQPQEFYQAGVELIGAGGVLADAEVLLVLAECLAELAPPDWTLILGAVAFTRSWLAQVAEPARHRLRRAMAELDRVAILAEAGIDEAVRSQLLLLFDLRGEPEMVLSKASSLPMSDAQRAELAELETLTGWLRGRSVPVVLDLSLVEAFDYYTGLIFEVSAGGRLIGRGGRYDHLLGSYGKPAPGAGFALNLEALQQVLLPTGKLPGRTVGGGFLVVPDGPDAWEAALAEADKLRCAPGERVEIELLGRTGEEAIAHGRALGAAVVRWVHPDGSTTDCDLAVIQ.

This sequence belongs to the class-II aminoacyl-tRNA synthetase family. HisZ subfamily. As to quaternary structure, heteromultimer composed of HisG and HisZ subunits.

The protein localises to the cytoplasm. It participates in amino-acid biosynthesis; L-histidine biosynthesis; L-histidine from 5-phospho-alpha-D-ribose 1-diphosphate: step 1/9. In terms of biological role, required for the first step of histidine biosynthesis. May allow the feedback regulation of ATP phosphoribosyltransferase activity by histidine. The polypeptide is ATP phosphoribosyltransferase regulatory subunit (Gloeobacter violaceus (strain ATCC 29082 / PCC 7421)).